A 315-amino-acid polypeptide reads, in one-letter code: D-erythronate dehydrogenase (315 aa).

Positions 119, 143, and 147 each coordinate NAD(+). The Proton acceptor role is filled by Y143.

Belongs to the NAD(P)-dependent epimerase/dehydratase family.

The enzyme catalyses D-erythronate + NAD(+) = 2-dehydro-D-erythronate + NADH + H(+). Catalyzes oxidation of D-erythronate to 2-oxo-tetronate. Can use either NAD(+) or NADP(+) as cosubstrate, with a preference for NAD(+). The chain is D-erythronate dehydrogenase from Haemophilus influenzae (strain ATCC 51907 / DSM 11121 / KW20 / Rd).